A 368-amino-acid chain; its full sequence is Glutamate 5-kinase (368 aa).

ATP is bound at residue Lys12. Residues Ser52, Asp139, and Asn151 each coordinate substrate. ATP is bound by residues 171-172 (SD) and 213-219 (TGGMKTK). The PUA domain occupies 277–354 (KGALIIDDGA…KEIEKLLGYI (78 aa)).

It belongs to the glutamate 5-kinase family.

Its subcellular location is the cytoplasm. It carries out the reaction L-glutamate + ATP = L-glutamyl 5-phosphate + ADP. Its pathway is amino-acid biosynthesis; L-proline biosynthesis; L-glutamate 5-semialdehyde from L-glutamate: step 1/2. Functionally, catalyzes the transfer of a phosphate group to glutamate to form L-glutamate 5-phosphate. This is Glutamate 5-kinase from Pelagibacter ubique (strain HTCC1062).